The following is a 398-amino-acid chain: O-methyltransferase aoiO (398 aa).

An S-adenosyl-L-methionine-binding site is contributed by aspartate 251. Residue histidine 299 is the Proton acceptor of the active site.

Belongs to the class I-like SAM-binding methyltransferase superfamily. Cation-independent O-methyltransferase family.

O-methyltransferase; part of the gene cluster that mediates the biosynthesis of a methylated derivative of known natural products orthosporin and diaporthin. Seems not to be involved in the biosynthesis of the identified final product of the pathway and its function has still to be determined. The protein is O-methyltransferase aoiO of Aspergillus oryzae (strain ATCC 42149 / RIB 40) (Yellow koji mold).